The following is a 305-amino-acid chain: GTPase Era (305 aa).

The Era-type G domain occupies 11–181; the sequence is RSGFVSFVGR…IKVMTDLLPE (171 aa). The tract at residues 19 to 26 is G1; sequence GRPNTGKS. 19–26 serves as a coordination point for GTP; the sequence is GRPNTGKS. Residues 45 to 49 are G2; it reads ETTRH. The interval 66-69 is G3; the sequence is DTPG. Residues 66 to 70 and 130 to 133 contribute to the GTP site; these read DTPGL and TKAD. Residues 130–133 are G4; sequence TKAD. The G5 stretch occupies residues 160–162; the sequence is VSS. The KH type-2 domain maps to 212–291; that stretch reads LKNELPHSVA…FLDLRIKVLK (80 aa).

Belongs to the TRAFAC class TrmE-Era-EngA-EngB-Septin-like GTPase superfamily. Era GTPase family. Monomer.

The protein localises to the cytoplasm. It is found in the cell membrane. Functionally, an essential GTPase that binds both GDP and GTP, with rapid nucleotide exchange. Plays a role in 16S rRNA processing and 30S ribosomal subunit biogenesis and possibly also in cell cycle regulation and energy metabolism. This is GTPase Era from Corynebacterium glutamicum (strain ATCC 13032 / DSM 20300 / JCM 1318 / BCRC 11384 / CCUG 27702 / LMG 3730 / NBRC 12168 / NCIMB 10025 / NRRL B-2784 / 534).